The chain runs to 216 residues: MOB kinase activator-like 1 homolog C (216 aa).

Residues Cys78, Cys83, His160, and His165 each coordinate Zn(2+).

Belongs to the MOB1/phocein family.

The polypeptide is MOB kinase activator-like 1 homolog C (mobC) (Dictyostelium discoideum (Social amoeba)).